The sequence spans 140 residues: Large ribosomal subunit protein uL11 (140 aa).

This sequence belongs to the universal ribosomal protein uL11 family. As to quaternary structure, part of the ribosomal stalk of the 50S ribosomal subunit. Interacts with L10 and the large rRNA to form the base of the stalk. L10 forms an elongated spine to which L12 dimers bind in a sequential fashion forming a multimeric L10(L12)X complex. In terms of processing, one or more lysine residues are methylated.

Its function is as follows. Forms part of the ribosomal stalk which helps the ribosome interact with GTP-bound translation factors. This Geobacter sp. (strain M21) protein is Large ribosomal subunit protein uL11.